A 494-amino-acid chain; its full sequence is MFS-type transporter lnaF (494 aa).

A disordered region spans residues 1-51 (MTYDPENAMGEARADAPVEAEKEHEATQTTVKESTLGYDNSSDPSRRDSYR). Residues 12–26 (ARADAPVEAEKEHEA) show a composition bias toward basic and acidic residues. 3 N-linked (GlcNAc...) asparagine glycosylation sites follow: Asn40, Asn58, and Asn68. Transmembrane regions (helical) follow at residues 105 to 125 (SLLI…DMFS), 128 to 148 (AGLL…TLAL), 156 to 176 (MLWY…GEYP), 203 to 223 (TLMA…CLIA), 228 to 248 (LPVT…IIMV), 290 to 310 (LAFF…STII), 323 to 343 (AIWQ…GAWL), 354 to 374 (ILGF…FPHL), 383 to 403 (VLYG…IGLI), and 446 to 466 (STFY…WFLP).

Belongs to the major facilitator superfamily. Sugar transporter (TC 2.A.1.1) family.

The protein localises to the cell membrane. Its function is as follows. MFS-type transporter; part of the lna gene cluster that mediates the biosynthesis of diastereomeric piperazines. Lna and lnb clusters encode sets of enzymes that produce overlapping sets of previously undescribed metabolites such as piperazinomycin-like metabolites or morpholine. The lna and lnb biosynthetic pathways appear to be part of a signaling network that controls the formation of sclerotia, a resilient overwintering structure. May be involved in the secretion of the metabolites produced by the lna and lnb clusters. This chain is MFS-type transporter lnaF, found in Aspergillus flavus (strain ATCC 200026 / FGSC A1120 / IAM 13836 / NRRL 3357 / JCM 12722 / SRRC 167).